The following is a 497-amino-acid chain: Probable malate:quinone oxidoreductase (497 aa).

It belongs to the MQO family. FAD is required as a cofactor.

It catalyses the reaction (S)-malate + a quinone = a quinol + oxaloacetate. It functions in the pathway carbohydrate metabolism; tricarboxylic acid cycle; oxaloacetate from (S)-malate (quinone route): step 1/1. This is Probable malate:quinone oxidoreductase from Flavobacterium johnsoniae (strain ATCC 17061 / DSM 2064 / JCM 8514 / BCRC 14874 / CCUG 350202 / NBRC 14942 / NCIMB 11054 / UW101) (Cytophaga johnsonae).